A 213-amino-acid chain; its full sequence is Probable nicotinate-nucleotide adenylyltransferase (213 aa).

It belongs to the NadD family.

It catalyses the reaction nicotinate beta-D-ribonucleotide + ATP + H(+) = deamido-NAD(+) + diphosphate. It functions in the pathway cofactor biosynthesis; NAD(+) biosynthesis; deamido-NAD(+) from nicotinate D-ribonucleotide: step 1/1. Catalyzes the reversible adenylation of nicotinate mononucleotide (NaMN) to nicotinic acid adenine dinucleotide (NaAD). In Ruegeria pomeroyi (strain ATCC 700808 / DSM 15171 / DSS-3) (Silicibacter pomeroyi), this protein is Probable nicotinate-nucleotide adenylyltransferase.